Here is a 1059-residue protein sequence, read N- to C-terminus: Ubiquitin carboxyl-terminal hydrolase 36 (1059 aa).

2 disordered regions span residues 22-45 (LGGN…NGSL) and 102-145 (GKLV…KPKR). Positions 23–45 (GGNSSAGSSTDQAKSGEDTNGSL) are enriched in polar residues. Residues 121–138 (HPNNQSHHNHPHPTSNPN) are compositionally biased toward low complexity. The 290-residue stretch at 168–457 (TGMINVGNTC…NAYIMFFELD (290 aa)) folds into the USP domain. Cys-177 (nucleophile) is an active-site residue. The active-site Proton acceptor is the His-416. Disordered stretches follow at residues 464-512 (PPAN…YTNG), 554-853 (ATSA…VTSN), 941-1005 (RQRD…FYNQ), and 1022-1059 (FGGA…QQQT). Composition is skewed to low complexity over residues 479 to 494 (STTP…PSPT) and 561 to 580 (NGNK…KSIN). Ser-490 and Ser-492 each carry phosphoserine. Polar residues predominate over residues 603–615 (TTAQLPSMPNMTE). A phosphothreonine mark is found at Thr-632 and Thr-636. Ser-646 and Ser-648 each carry phosphoserine. Positions 673–702 (ESGQTNGHSKTNGSLTNGSASSSVHVNNSK) are enriched in polar residues. Positions 703 to 720 (QKTDAIDEIFKSLKKSAD) are enriched in basic and acidic residues. Ser-721 bears the Phosphoserine mark. Residues 721–730 (SEEDDDEEEP) are compositionally biased toward acidic residues. Low complexity predominate over residues 740 to 750 (PQKQSQSQSKA). Pro residues predominate over residues 751–760 (PPSPKTPPSP). Ser-753 is subject to Phosphoserine. A Phosphothreonine modification is found at Thr-756. Ser-759 bears the Phosphoserine mark. Acidic residues predominate over residues 779 to 788 (DAIDDDDDAV). A Phosphothreonine modification is found at Thr-799. The segment covering 806-818 (NPFSSSKPSTDSP) has biased composition (polar residues). Ser-817 bears the Phosphoserine mark. Thr-820 is subject to Phosphothreonine. A compositionally biased stretch (polar residues) spans 833–853 (ALKSHQQPRVGNGYQSNVTSN). The span at 963–974 (SGSAKGNNASNS) shows a compositional bias: low complexity.

Belongs to the peptidase C19 family. Interacts with atms/PAF1, but not with CycT.

The protein resides in the nucleus. Its subcellular location is the nucleolus. The enzyme catalyses Thiol-dependent hydrolysis of ester, thioester, amide, peptide and isopeptide bonds formed by the C-terminal Gly of ubiquitin (a 76-residue protein attached to proteins as an intracellular targeting signal).. In terms of biological role, required for maintaining multiple types of adult stem cells, including male and female germline, epithelial follicle cell and intestinal stem cells. May function as a transcriptional repressor by continually deubiquiting histone H2B at the promoters of genes critical for cellular differentiation, thereby preventing histone H3 'Lys-4' trimethylation (H3K4). Controls selective autophagy activation by ubiquitinated proteins. In Drosophila sechellia (Fruit fly), this protein is Ubiquitin carboxyl-terminal hydrolase 36 (Usp36).